The sequence spans 149 residues: YbbR-like domain-containing protein in def 5'region (149 aa).

The YbbR-like domain occupies Ile1–Glu68.

The sequence is that of YbbR-like domain-containing protein in def 5'region from Thermus thermophilus.